The following is a 386-amino-acid chain: Cytochrome b (386 aa).

Helical transmembrane passes span 32-52, 76-98, 113-133, and 179-199; these read LGSLLGLCLVIQIASGIFLAM, YLIRYIHANGASFFFVCMYAHIG, VWVIGVVIFIITMATAFLGYC, and FFALHYLCPFILAALVIMHLM. Heme b contacts are provided by His82 and His96. Residues His183 and His197 each contribute to the heme b site. His202 provides a ligand contact to a ubiquinone. The next 4 helical transmembrane spans lie at 225 to 245, 289 to 309, 321 to 341, and 348 to 368; these read FVFKDLVTVFVFLLIFSLFVF, LGGVIAMFAAILILLVLPVTD, ISKTFFFLFLYNFILLGQLGQ, and FIQLGQFATLNYFLYFIFIVP.

It belongs to the cytochrome b family. Fungal cytochrome b-c1 complex contains 10 subunits; 3 respiratory subunits, 2 core proteins and 5 low-molecular weight proteins. Cytochrome b-c1 complex is a homodimer. Heme b is required as a cofactor.

It localises to the mitochondrion inner membrane. Component of the ubiquinol-cytochrome c reductase complex (complex III or cytochrome b-c1 complex) that is part of the mitochondrial respiratory chain. The b-c1 complex mediates electron transfer from ubiquinol to cytochrome c. Contributes to the generation of a proton gradient across the mitochondrial membrane that is then used for ATP synthesis. The sequence is that of Cytochrome b (COB) from Wickerhamomyces canadensis (Yeast).